The sequence spans 375 residues: Platelet-derived growth factor receptor-like protein (375 aa).

The signal sequence occupies residues 1-21 (MKVWLLLGLLLVHEALEDVTG). A disordered region spans residues 22 to 64 (QHLPKNKRPKEPGENRIKPTNKKVKPKIPKIKDRDSADSTPKT). Over residues 40 to 50 (PTNKKVKPKIP) the composition is skewed to basic residues. Residues 62–159 (PKTQSIMMQV…GYICRKDETK (98 aa)) enclose the Ig-like C2-type 1 domain. A disulfide bridge connects residues Cys-96 and Cys-143. N-linked (GlcNAc...) asparagine glycosylation is found at Asn-132 and Asn-219. Positions 272 to 375 (PSTTILASSN…TTVATTVEFS (104 aa)) constitute an Ig-like C2-type 2 domain. The cysteines at positions 293 and 357 are disulfide-linked.

Forms a complex composed of PDGFRL, TNK2 and GRB2.

It localises to the secreted. This chain is Platelet-derived growth factor receptor-like protein (PDGFRL), found in Macaca fascicularis (Crab-eating macaque).